Consider the following 113-residue polypeptide: MYGGICLCVLLAVLAISSSGQHISRSLNGNSLAAAIEQNFPEKHRPARTPDSNQRVESNIDEKANLGVLLARYLQKARRGTNGKPPDPKKESQDYLGWMDFGRRSAEEYEYSS.

The N-terminal stretch at 1-20 is a signal peptide; that stretch reads MYGGICLCVLLAVLAISSSG. A propeptide spanning residues 21 to 79 is cleaved from the precursor; it reads QHISRSLNGNSLAAAIEQNFPEKHRPARTPDSNQRVESNIDEKANLGVLLARYLQKARR. The tract at residues 77–97 is disordered; sequence ARRGTNGKPPDPKKESQDYLG. Sulfotyrosine is present on Y95. A Phenylalanine amide modification is found at F101. Residues 102-113 constitute a propeptide that is removed on maturation; that stretch reads GRRSAEEYEYSS.

This sequence belongs to the gastrin/cholecystokinin family. As to expression, expressed by the mandibular venom gland.

It localises to the secreted. Functionally, cholecystokinin-22: hypotensive neuropeptide that binds cholecystokinin receptor type A receptor (CCKAR). Its function is as follows. Cholecystokinin-8: hypotensive neuropeptide that binds cholecystokinin receptor type A receptor (CCKAR). The chain is Cholecystoxin from Varanus varius (Lace monitor lizard).